The following is a 249-amino-acid chain: Vesicle-associated membrane protein-associated protein A (249 aa).

A2 carries the N-acetylalanine modification. The Cytoplasmic segment spans residues 2–227 (ASASGAMAKH…VSFRDNVTSP (226 aa)). Residues 14–131 (ILVLDPPSDL…MDSKLRCVFE (118 aa)) form the MSP domain. The interval 50 to 53 (KVKT) is phosphorylated FFAT motif binding. K125 carries the post-translational modification N6-acetyllysine. The segment covering 135–144 (ENDKLNDMEP) has biased composition (basic and acidic residues). Residues 135–166 (ENDKLNDMEPSKAVPLNASKQDGPLPKPHSVS) form a disordered region. Position 166 is a phosphoserine (S166). Positions 168-207 (NDTETRKLMEECKRLQGEMMKLSEENRHLRDEGLRLRKVA) form a coiled coil. Position 170 is a phosphothreonine (T170). Residues S214, S216, and S219 each carry the phosphoserine modification. The chain crosses the membrane as a helical; Anchor for type IV membrane protein span at residues 228–248 (LPSLLVVIAAIFIGFFLGKFI).

This sequence belongs to the VAMP-associated protein (VAP) (TC 9.B.17) family. As to quaternary structure, homodimer; disulfide-linked. Heterodimer with VAPB. Interacts with VAMP1, VAMP2, STX1A, BET1, SEC22C and with the C-terminal domain of OCLN. Interacts (via MSP domain) with OSBPL1A (via FFAT motif). Interacts (via MSP domain) with ZFYVE27; may retain ZFYVE27 in the endoplasmic reticulum and regulate its function in cell projections formation. Interacts with OSBP. Interacts (via C-terminus) with RSAD2/viperin (via C-terminus). Interacts with IFITM3. Interacts with OSBPL3 (phosphorylated form). Interacts with KIF5A in a ZFYVE27-dependent manner. Interacts (via MSP domain) with STARD3 (via phosphorylated FFAT motif); this interaction recruits VAPA to the endosome. Interacts with STARD3NL (via FFAT motif). Interacts with CERT1. Interacts with PLEKHA3 and SACM1L to form a ternary complex. Interacts with VPS13A (via FFAT motif). Interacts with RB1CC1 (via phosphorylated FFAT motif), MIGA2 (via phosphorylated FFAT motif), RMDN3 (via phosphorylated FFAT motif), KCNB1 (via phosphorylated FFAT motif) and KCNB2 (via phosphorylated FFAT motif). Interacts (via MSP domain) with WDR44; the interactions connect the endoplasmic reticulum (ER) with the endosomal tubule. In terms of tissue distribution, ubiquitous.

It localises to the endoplasmic reticulum membrane. Its subcellular location is the cell membrane. It is found in the cell junction. The protein localises to the tight junction. The protein resides in the nucleus membrane. Its function is as follows. Endoplasmic reticulum (ER)-anchored protein that mediates the formation of contact sites between the ER and endosomes via interaction with FFAT motif-containing proteins such as STARD3 or WDR44. STARD3-VAPA interaction enables cholesterol transfer from the ER to endosomes. Via interaction with WDR44 participates in neosynthesized protein export. In addition, recruited to the plasma membrane through OSBPL3 binding. The OSBPL3-VAPA complex stimulates RRAS signaling which in turn attenuates integrin beta-1 (ITGB1) activation at the cell surface. With OSBPL3, may regulate ER morphology. May play a role in vesicle trafficking. The chain is Vesicle-associated membrane protein-associated protein A from Rattus norvegicus (Rat).